A 192-amino-acid chain; its full sequence is Phosphomevalonate kinase (192 aa).

ATP contacts are provided by residues 17–23 (KRKSGKD) and Arg141. Asn170 contacts substrate. ATP contacts are provided by His171, Arg176, and Gln180.

In terms of assembly, monomer. As to expression, heart, liver, skeletal muscle, kidney, and pancreas. Lower level in brain, placenta and lung.

It is found in the cytoplasm. The protein localises to the cytosol. The enzyme catalyses (R)-5-phosphomevalonate + ATP = (R)-5-diphosphomevalonate + ADP. Its pathway is isoprenoid biosynthesis; isopentenyl diphosphate biosynthesis via mevalonate pathway; isopentenyl diphosphate from (R)-mevalonate: step 2/3. Its function is as follows. Catalyzes the reversible ATP-dependent phosphorylation of mevalonate 5-phosphate to produce mevalonate diphosphate and ADP, a key step in the mevalonic acid mediated biosynthesis of isopentenyl diphosphate and other polyisoprenoid metabolites. This Homo sapiens (Human) protein is Phosphomevalonate kinase (PMVK).